Reading from the N-terminus, the 357-residue chain is MSAPTTAIDALLAEHADLERQLADPALHADAGKARKAGRRFAQLAPIVATYRKLEAARGDLEAARELGADDASFAAEVPELEATVDQLETQLSDLLAPRDPHDADDIVLEVKSGEGGEESALFAADLARMYIRYAERHGWSVTILDETTSDLGGYKDATLSIRSKGDSADGVWSRLKFEGGVHRVQRVPVTESQGRVHTSAAGVLVYPEPEEVEQVQIDESDLRIDVYRSSGKGGQGVNTTDSAVRITHLPTGIVVTCQNERSQLQNKARAMQVLAARLQSLAEEQASADASADRASQIRTVDRSERIRTYNFPENRIADHRINFKAHNLDQVLDGDLDPLFDALAAADKQARLQSS.

Gln236 bears the N5-methylglutamine mark.

The protein belongs to the prokaryotic/mitochondrial release factor family. In terms of processing, methylated by PrmC. Methylation increases the termination efficiency of RF1.

The protein localises to the cytoplasm. Its function is as follows. Peptide chain release factor 1 directs the termination of translation in response to the peptide chain termination codons UAG and UAA. This is Peptide chain release factor 1 from Mycobacterium sp. (strain JLS).